The chain runs to 283 residues: 1D-myo-inositol 2-acetamido-2-deoxy-alpha-D-glucopyranoside deacetylase (283 aa).

Positions 15, 18, and 150 each coordinate Zn(2+).

It belongs to the MshB deacetylase family. The cofactor is Zn(2+).

It carries out the reaction 1D-myo-inositol 2-acetamido-2-deoxy-alpha-D-glucopyranoside + H2O = 1D-myo-inositol 2-amino-2-deoxy-alpha-D-glucopyranoside + acetate. Its function is as follows. Catalyzes the deacetylation of 1D-myo-inositol 2-acetamido-2-deoxy-alpha-D-glucopyranoside (GlcNAc-Ins) in the mycothiol biosynthesis pathway. The protein is 1D-myo-inositol 2-acetamido-2-deoxy-alpha-D-glucopyranoside deacetylase of Actinosynnema mirum (strain ATCC 29888 / DSM 43827 / JCM 3225 / NBRC 14064 / NCIMB 13271 / NRRL B-12336 / IMRU 3971 / 101).